A 667-amino-acid polypeptide reads, in one-letter code: Probable potassium transport system protein Kup (667 aa).

12 helical membrane-spanning segments follow: residues 16 to 36 (GFIIALGIVYGDIGTSPLYTM), 58 to 78 (VSLIIWTLTLVTTIKYVLIAL), 101 to 121 (WLIIPAMLGGATLLSDGALTP), 146 to 166 (TNVILTTLLILMVLFGLQRFG), 167 to 187 (TGVIGKLFGPVMLVWFSVLGI), 221 to 241 (IFILGSIFLATTGAEALYSDL), 253 to 273 (WPFVKVCIILSYCGQAAWILA), 294 to 314 (VYLVILATLAAIIASQALISG), 343 to 363 (LYIPVINWSLFAVTSCTVLYF), 373 to 393 (YGLAITITMLMTTILLAYYLI), 399 to 419 (PLLASLLMAFFAFIEFIFFLA), and 424 to 444 (FMHGGYVVVVLALAIVFVMVI).

The protein belongs to the HAK/KUP transporter (TC 2.A.72) family.

Its subcellular location is the cell membrane. The catalysed reaction is K(+)(in) + H(+)(in) = K(+)(out) + H(+)(out). Its function is as follows. Transport of potassium into the cell. Likely operates as a K(+):H(+) symporter. The polypeptide is Probable potassium transport system protein Kup (Streptococcus equi subsp. equi (strain 4047)).